We begin with the raw amino-acid sequence, 353 residues long: MHLRHLFSPRLRGSLLLGSLLVASSFSTLAAEDMLRKAVGKGAYEMAWSQQENALWLATSQSRKLDKGGVVYRLDPVTLEITQAIHNDLKPFGATINAATQTLWFGNTINSAVTAIDAKTGDVKGRLVLDARKRTEEVRPLQPRELVADAATNTIYISGVGKESAIWVVDGETIKLKTTIENTGKMSTGLALDSKAQRLYTTNADGEFITIDTASNKILSRKKLLDDGKEHFFINLSLDTAGHRAFITDSKATEVLVVDTRNGNILAKIAAPASLAVLFNPTRNEAYVTHRQAGQVSVIDAKTYNVVKTFDTPTYPNSLALSADGKTLYVSVKQKSTREQEATQPDDVIRIAL.

An N-terminal signal peptide occupies residues 1–30 (MHLRHLFSPRLRGSLLLGSLLVASSFSTLA).

This is an uncharacterized protein from Salmonella typhimurium (strain LT2 / SGSC1412 / ATCC 700720).